A 298-amino-acid chain; its full sequence is Probable pyridoxal 5'-phosphate synthase subunit SNZ3 (298 aa).

Asp21 contacts D-ribose 5-phosphate. Residue Lys78 is the Schiff-base intermediate with D-ribose 5-phosphate of the active site. D-ribose 5-phosphate-binding positions include Gly150, Gly213, and 234–235 (GS).

It belongs to the PdxS/SNZ family. As to quaternary structure, homohexamer. Interacts with THI11.

The enzyme catalyses aldehydo-D-ribose 5-phosphate + D-glyceraldehyde 3-phosphate + L-glutamine = pyridoxal 5'-phosphate + L-glutamate + phosphate + 3 H2O + H(+). It functions in the pathway cofactor biosynthesis; pyridoxal 5'-phosphate biosynthesis. Catalyzes the formation of pyridoxal 5'-phosphate from ribose 5-phosphate (RBP), glyceraldehyde 3-phosphate (G3P) and ammonia. The ammonia is provided by a SNO isoform. Can also use ribulose 5-phosphate and dihydroxyacetone phosphate as substrates, resulting from enzyme-catalyzed isomerization of RBP and G3P, respectively. This chain is Probable pyridoxal 5'-phosphate synthase subunit SNZ3 (SNZ3), found in Saccharomyces cerevisiae (strain ATCC 204508 / S288c) (Baker's yeast).